The chain runs to 534 residues: Flavonoid-6-hydroxylase (534 aa).

The chain crosses the membrane as a helical span at residues 3–23 (FISFVYTLIAFSSLLYFYLIW). Cys-467 is a heme binding site.

Belongs to the cytochrome P450 family. Requires heme as cofactor. Expressed in leaves.

The protein localises to the membrane. It catalyses the reaction genkwanin + reduced [NADPH--hemoprotein reductase] + O2 = scutellarein 7-methyl ether + oxidized [NADPH--hemoprotein reductase] + H2O. The enzyme catalyses (2S)-sakuranetin + reduced [NADPH--hemoprotein reductase] + O2 = (2S)-7-methylcarthamidin + oxidized [NADPH--hemoprotein reductase] + H2O + H(+). The catalysed reaction is apigenin 4',7-dimethyl ether + reduced [NADPH--hemoprotein reductase] + O2 = ladanein + oxidized [NADPH--hemoprotein reductase] + H2O + H(+). It carries out the reaction (2S)-naringenin 4',7-dimethyl ether + reduced [NADPH--hemoprotein reductase] + O2 = (2S)-carthamidin-4',7-dimethyl ether + oxidized [NADPH--hemoprotein reductase] + H2O + H(+). It functions in the pathway flavonoid metabolism. In terms of biological role, hydroxylase involved in the biosynthesis of polymethoxylated flavonoids natural products such as nevadensin and salvigenin, aroma compounds which contribute to the flavor of sweet basil, and exhibit pharmacological activities such as anti-allergic, anti-oxidant, antibacterial, anti-proliferative, and anti-inflammatory effects. Catalyzes the 6-hydroxylation of 7-O-methylated precursors such as the conversion of genkwanin (GENK) to scutellarein-7-methyl ether (SCU7Me). Can also use, with a lower efficiency, apigenin-7,4'-dimethyl ether (AdM), naringenin-7-methyl ether (SAK) and naringenin-7,4'-dimethyl ether (NdM) as substrates. The polypeptide is Flavonoid-6-hydroxylase (Ocimum basilicum (Sweet basil)).